We begin with the raw amino-acid sequence, 205 residues long: Putative 3-methyladenine DNA glycosylase (205 aa).

Belongs to the DNA glycosylase MPG family.

This chain is Putative 3-methyladenine DNA glycosylase, found in Bacillus thuringiensis (strain Al Hakam).